The sequence spans 105 residues: Pyrimidine/purine nucleoside phosphorylase (105 aa).

It belongs to the nucleoside phosphorylase PpnP family.

It catalyses the reaction a purine D-ribonucleoside + phosphate = a purine nucleobase + alpha-D-ribose 1-phosphate. The enzyme catalyses adenosine + phosphate = alpha-D-ribose 1-phosphate + adenine. It carries out the reaction cytidine + phosphate = cytosine + alpha-D-ribose 1-phosphate. The catalysed reaction is guanosine + phosphate = alpha-D-ribose 1-phosphate + guanine. It catalyses the reaction inosine + phosphate = alpha-D-ribose 1-phosphate + hypoxanthine. The enzyme catalyses thymidine + phosphate = 2-deoxy-alpha-D-ribose 1-phosphate + thymine. It carries out the reaction uridine + phosphate = alpha-D-ribose 1-phosphate + uracil. The catalysed reaction is xanthosine + phosphate = alpha-D-ribose 1-phosphate + xanthine. Functionally, catalyzes the phosphorolysis of diverse nucleosides, yielding D-ribose 1-phosphate and the respective free bases. Can use uridine, adenosine, guanosine, cytidine, thymidine, inosine and xanthosine as substrates. Also catalyzes the reverse reactions. The chain is Pyrimidine/purine nucleoside phosphorylase from Cupriavidus necator (strain ATCC 17699 / DSM 428 / KCTC 22496 / NCIMB 10442 / H16 / Stanier 337) (Ralstonia eutropha).